The primary structure comprises 254 residues: 3-deoxy-manno-octulosonate cytidylyltransferase (254 aa).

Belongs to the KdsB family.

It localises to the cytoplasm. It catalyses the reaction 3-deoxy-alpha-D-manno-oct-2-ulosonate + CTP = CMP-3-deoxy-beta-D-manno-octulosonate + diphosphate. Its pathway is nucleotide-sugar biosynthesis; CMP-3-deoxy-D-manno-octulosonate biosynthesis; CMP-3-deoxy-D-manno-octulosonate from 3-deoxy-D-manno-octulosonate and CTP: step 1/1. The protein operates within bacterial outer membrane biogenesis; lipopolysaccharide biosynthesis. Its function is as follows. Activates KDO (a required 8-carbon sugar) for incorporation into bacterial lipopolysaccharide in Gram-negative bacteria. The chain is 3-deoxy-manno-octulosonate cytidylyltransferase from Pseudomonas entomophila (strain L48).